The sequence spans 215 residues: Phosphatidylserine decarboxylase proenzyme (215 aa).

Ser183 serves as the catalytic Schiff-base intermediate with substrate; via pyruvic acid. The residue at position 183 (Ser183) is a Pyruvic acid (Ser); by autocatalysis.

The protein belongs to the phosphatidylserine decarboxylase family. PSD-A subfamily. As to quaternary structure, heterodimer of a large membrane-associated beta subunit and a small pyruvoyl-containing alpha subunit. Requires pyruvate as cofactor. Is synthesized initially as an inactive proenzyme. Formation of the active enzyme involves a self-maturation process in which the active site pyruvoyl group is generated from an internal serine residue via an autocatalytic post-translational modification. Two non-identical subunits are generated from the proenzyme in this reaction, and the pyruvate is formed at the N-terminus of the alpha chain, which is derived from the carboxyl end of the proenzyme. The post-translation cleavage follows an unusual pathway, termed non-hydrolytic serinolysis, in which the side chain hydroxyl group of the serine supplies its oxygen atom to form the C-terminus of the beta chain, while the remainder of the serine residue undergoes an oxidative deamination to produce ammonia and the pyruvoyl prosthetic group on the alpha chain.

The protein localises to the cell membrane. The catalysed reaction is a 1,2-diacyl-sn-glycero-3-phospho-L-serine + H(+) = a 1,2-diacyl-sn-glycero-3-phosphoethanolamine + CO2. It functions in the pathway phospholipid metabolism; phosphatidylethanolamine biosynthesis; phosphatidylethanolamine from CDP-diacylglycerol: step 2/2. Its function is as follows. Catalyzes the formation of phosphatidylethanolamine (PtdEtn) from phosphatidylserine (PtdSer). In Symbiobacterium thermophilum (strain DSM 24528 / JCM 14929 / IAM 14863 / T), this protein is Phosphatidylserine decarboxylase proenzyme.